The chain runs to 186 residues: Negative modulator of initiation of replication (186 aa).

This sequence belongs to the SeqA family. As to quaternary structure, homodimer. Polymerizes to form helical filaments.

The protein localises to the cytoplasm. In terms of biological role, negative regulator of replication initiation, which contributes to regulation of DNA replication and ensures that replication initiation occurs exactly once per chromosome per cell cycle. Binds to pairs of hemimethylated GATC sequences in the oriC region, thus preventing assembly of replication proteins and re-initiation at newly replicated origins. Repression is relieved when the region becomes fully methylated. The polypeptide is Negative modulator of initiation of replication (Haemophilus ducreyi (strain 35000HP / ATCC 700724)).